The primary structure comprises 158 residues: Transcriptional repressor NrdR (158 aa).

A zinc finger spans residues 3–34 (CPFCGNADTQVVDSRVSEEGDTIRRRRRCLSC). One can recognise an ATP-cone domain in the interval 49–139 (PSVVKRNGSR…VYKNFEDIGE (91 aa)).

It belongs to the NrdR family. Zn(2+) serves as cofactor.

In terms of biological role, negatively regulates transcription of bacterial ribonucleotide reductase nrd genes and operons by binding to NrdR-boxes. The chain is Transcriptional repressor NrdR from Bordetella petrii (strain ATCC BAA-461 / DSM 12804 / CCUG 43448).